The chain runs to 480 residues: Glutamate--tRNA ligase (480 aa).

Positions 21-31 (PSPTGYLHVGG) match the 'HIGH' region motif. Zn(2+) is bound by residues C110, C112, C137, and H139. The short motif at 248-252 (KLSKR) is the 'KMSKS' region element. K251 serves as a coordination point for ATP.

This sequence belongs to the class-I aminoacyl-tRNA synthetase family. Glutamate--tRNA ligase type 1 subfamily. Monomer. The cofactor is Zn(2+).

Its subcellular location is the cytoplasm. It carries out the reaction tRNA(Glu) + L-glutamate + ATP = L-glutamyl-tRNA(Glu) + AMP + diphosphate. Catalyzes the attachment of glutamate to tRNA(Glu) in a two-step reaction: glutamate is first activated by ATP to form Glu-AMP and then transferred to the acceptor end of tRNA(Glu). The sequence is that of Glutamate--tRNA ligase from Haemophilus influenzae (strain 86-028NP).